The sequence spans 260 residues: UPF0294 protein plu0699 (260 aa).

The protein belongs to the UPF0294 family.

It is found in the cytoplasm. The polypeptide is UPF0294 protein plu0699 (Photorhabdus laumondii subsp. laumondii (strain DSM 15139 / CIP 105565 / TT01) (Photorhabdus luminescens subsp. laumondii)).